The primary structure comprises 580 residues: Opioid growth factor receptor (580 aa).

M1 is modified (N-acetylmethionine). The segment covering 1–38 (MDDPDCDSTWEEESEEDGEDGQADDTTDEDTGDDDGDA) has biased composition (acidic residues). 2 disordered regions span residues 1–44 (MDDP…ARPS) and 285–390 (FKPQ…VSEV). The Bipartite nuclear localization signal motif lies at 257 to 286 (RRELVYFAWEHFKPRREFVWGPRDKLRRFK). A compositionally biased stretch (basic and acidic residues) spans 300-310 (ADKDEGSRDPS). S327, S361, S365, and S403 each carry phosphoserine. Positions 352-374 (NQRDEAKSLSPKESKKRKLEGNR) are enriched in basic and acidic residues. Positions 405-580 (ISQEPREAEP…IEASAEPPKP (176 aa)) are disordered. Tandem repeats lie at residues 467–475 (GPEDSNSQV), 476–484 (GAEDSKSQV), 485–493 (GPEDPNSQV), 494–502 (GLEDPNSQV), 503–511 (GPEDPNSQV), 512–520 (GPEDPNSQV), 521–529 (GPEDPNSQV), and 530–538 (GPEDPNSQV). The 8 X approximate tandem repeats stretch occupies residues 467-538 (GPEDSNSQVG…VGPEDPNSQV (72 aa)). Residues 489-538 (PNSQVGLEDPNSQVGPEDPNSQVGPEDPNSQVGPEDPNSQVGPEDPNSQV) show a composition bias toward polar residues. Phosphoserine is present on residues S548 and S555.

This sequence belongs to the opioid growth factor receptor family. In terms of tissue distribution, highly expressed in 6-day old cerebellum and brain. Lower expressed in adult cerebellum. The protein is detected in germinal cells of the cerebellum, in neurons of the deep cerebellar nuclei and in the glia in the medullary layer.

It is found in the cytoplasm. The protein localises to the perinuclear region. Its subcellular location is the nucleus. Functionally, receptor for opioid growth factor (OGF), also known as Met-enkephalin. Seems to be involved in growth regulation. The chain is Opioid growth factor receptor (Ogfr) from Rattus norvegicus (Rat).